We begin with the raw amino-acid sequence, 299 residues long: uncharacterized protein (299 aa).

This is an uncharacterized protein from Mycobacterium tuberculosis (strain CDC 1551 / Oshkosh).